Reading from the N-terminus, the 2131-residue chain is Protein Ycf2 (2131 aa).

1466 to 1473 lines the ATP pocket; that stretch reads GSIGTGRS.

The protein belongs to the Ycf2 family.

It localises to the plastid. The protein localises to the chloroplast stroma. Its function is as follows. Probable ATPase of unknown function. Its presence in a non-photosynthetic plant (Epifagus virginiana) and experiments in tobacco indicate that it has an essential function which is probably not related to photosynthesis. This Helianthus annuus (Common sunflower) protein is Protein Ycf2.